Reading from the N-terminus, the 126-residue chain is MGYRKLGRTSSQRKAMLRDLATDLIINERIETTEARAKEVRKAVEKMITLGKRGDLHARRQAAAFIRRELVTTTDAEGNETTSFALQKLFDDVAPRYAERQGGYTRILKVGPRRGDGAPVVVIELV.

Belongs to the bacterial ribosomal protein bL17 family. In terms of assembly, part of the 50S ribosomal subunit. Contacts protein L32.

The protein is Large ribosomal subunit protein bL17 of Lysinibacillus sphaericus (strain C3-41).